The primary structure comprises 100 residues: uncharacterized protein (100 aa).

The next 2 helical transmembrane spans lie at 1 to 21 and 54 to 74; these read MLVL…YKVK and MILF…VIGA.

It is found in the cell membrane. This is an uncharacterized protein from Bacillus subtilis (strain 168).